The sequence spans 164 residues: Galectin-3 (164 aa).

Residues 9 to 154 (STVDLSEPLK…FSDVLGVTVL (146 aa)) enclose the Galectin domain. Residues histidine 60, arginine 64, asparagine 73, and glutamate 84 each contribute to the a carbohydrate site.

As to quaternary structure, homotetramer. Oligomerization is required for carbohydrate binding.

It localises to the secreted. The protein resides in the extracellular space. The protein localises to the extracellular matrix. Its subcellular location is the cell wall. Functionally, binds lactose. May play a role in fruiting body formation. The chain is Galectin-3 (Cgl3) from Coprinopsis cinerea (strain Okayama-7 / 130 / ATCC MYA-4618 / FGSC 9003) (Inky cap fungus).